The primary structure comprises 173 residues: Archaemetzincin (173 aa).

Histidine 130 contacts Zn(2+). The active-site Proton acceptor is glutamate 131. Residues histidine 134, histidine 140, cysteine 141, cysteine 146, cysteine 165, and cysteine 168 each contribute to the Zn(2+) site.

It belongs to the peptidase M54 family. Monomer. Zn(2+) is required as a cofactor.

Its function is as follows. Probable zinc metalloprotease whose natural substrate is unknown. In Haloarcula marismortui (strain ATCC 43049 / DSM 3752 / JCM 8966 / VKM B-1809) (Halobacterium marismortui), this protein is Archaemetzincin.